The following is a 278-amino-acid chain: MTKLHSVDFFPAQEVSVAIEPRLPQGAFPEHHHDFHEIVIVEHGTGIHVLNGQPYTISGGMVCFIRDSDRHMYEHTDNLNLTNVLYRSPDKFRFLAGLHQLLPQECNGHYPSHWRIDQHTLQQVRQLITRLEQVSAGQDLSTVANREILFMQLLVALRKNSLLEGDENTDARLNHLIAWLEDHFAEAVSWEAIADRFALSLRTLHRQLKQHTGLTPQRYLNRLRLVKARHLLRHSDDSVTHIAFSCGFADSNHFSTLFRREFGWSPREIRQGRDASLQ.

One can recognise an HTH araC/xylS-type domain in the interval 174–272 (NHLIAWLEDH…GWSPREIRQG (99 aa)). 2 consecutive DNA-binding regions (H-T-H motif) follow at residues 191–212 (EAIA…KQHT) and 239–262 (VTHI…RREF).

Binds DNA as a dimer.

It localises to the cytoplasm. Functionally, activates expression of the rhaBAD and rhaT operons. The chain is HTH-type transcriptional activator RhaS from Escherichia fergusonii (strain ATCC 35469 / DSM 13698 / CCUG 18766 / IAM 14443 / JCM 21226 / LMG 7866 / NBRC 102419 / NCTC 12128 / CDC 0568-73).